Consider the following 214-residue polypeptide: 3,4-dihydroxy-2-butanone 4-phosphate synthase (214 aa).

Residues 37 to 38 (RE), D42, 150 to 154 (RRGHT), and E174 each bind D-ribulose 5-phosphate. E38 lines the Mg(2+) pocket. Mg(2+) is bound at residue H153.

It belongs to the DHBP synthase family. Homodimer. The cofactor is Mg(2+). Requires Mn(2+) as cofactor.

It carries out the reaction D-ribulose 5-phosphate = (2S)-2-hydroxy-3-oxobutyl phosphate + formate + H(+). It participates in cofactor biosynthesis; riboflavin biosynthesis; 2-hydroxy-3-oxobutyl phosphate from D-ribulose 5-phosphate: step 1/1. In terms of biological role, catalyzes the conversion of D-ribulose 5-phosphate to formate and 3,4-dihydroxy-2-butanone 4-phosphate. The polypeptide is 3,4-dihydroxy-2-butanone 4-phosphate synthase (Desulfotalea psychrophila (strain LSv54 / DSM 12343)).